The following is a 234-amino-acid chain: uncharacterized protein (234 aa).

The segment covering 1–12 (MGSSSSSSLNNS) has biased composition (low complexity). The tract at residues 1–184 (MGSSSSSSLN…TPYLSGANSR (184 aa)) is disordered. 2 stretches are compositionally biased toward polar residues: residues 21-40 (TPES…SILS) and 52-64 (KSTS…NLTP). Positions 66 to 77 (KSRWSFSSSKKS) are enriched in low complexity. Positions 105–120 (GDFTPSLGNTPKSSFS) are enriched in polar residues. A compositionally biased stretch (basic and acidic residues) spans 152–167 (LGELFRDSIREEREES).

In terms of assembly, interacts with RLK902. In terms of tissue distribution, expressed in stems, rosette leaves and roots and weakly in inflorescences.

This is an uncharacterized protein from Arabidopsis thaliana (Mouse-ear cress).